Reading from the N-terminus, the 330-residue chain is Agamous-like MADS-box protein AGL75 (330 aa).

The 43-residue stretch at 19–61 folds into the MADS-box domain; the sequence is TSLSNRLETIFKKASELCTLCDIEACVIYYGPDGELKTWPKEK.

In terms of assembly, interacts with MEE14/CBP1.

It localises to the nucleus. Functionally, probable transcription factor that may function in the maintenance of the proper function of the central cell in pollen tube attraction. In Arabidopsis thaliana (Mouse-ear cress), this protein is Agamous-like MADS-box protein AGL75.